Here is a 376-residue protein sequence, read N- to C-terminus: MNDVLDLTCDLIARASVTPEDAGCQALLAGRLTAAGFACEHLRLGEVDNLWATHGSGAPVLVLLGHTDVVPPGPREAWTSDPFDPQIRDGVLYGRGVADMKGSVAAFVVAAEQFVAAHRAHAGTLAVLLTSDEEGDAIDGVRRVANLFRERGQAIDWCITGEPSSTERLGDLLRVGRRGSLSGTLTVKGVQGHVAYPHKARNPIHLAAPALAELVARQWDDGFESFPPTSLQVSNIHAGTGANNVIPGELQVAFNLRYTPHWDAPRLETEITALLDRHALDYALRWHRSGEPFYTPEGRLRSVAREVLGAFAGAPPEESTGGGTSDARFIAPLGAQCIEVGPVNASIHQVDEHVRVADLQALPALYRTLIERLLVE.

Histidine 66 contacts Zn(2+). The active site involves aspartate 68. Residue aspartate 99 participates in Zn(2+) binding. The active-site Proton acceptor is glutamate 133. 3 residues coordinate Zn(2+): glutamate 134, glutamate 162, and histidine 348.

Belongs to the peptidase M20A family. DapE subfamily. As to quaternary structure, homodimer. Zn(2+) is required as a cofactor. It depends on Co(2+) as a cofactor.

It catalyses the reaction N-succinyl-(2S,6S)-2,6-diaminopimelate + H2O = (2S,6S)-2,6-diaminopimelate + succinate. It functions in the pathway amino-acid biosynthesis; L-lysine biosynthesis via DAP pathway; LL-2,6-diaminopimelate from (S)-tetrahydrodipicolinate (succinylase route): step 3/3. Its function is as follows. Catalyzes the hydrolysis of N-succinyl-L,L-diaminopimelic acid (SDAP), forming succinate and LL-2,6-diaminopimelate (DAP), an intermediate involved in the bacterial biosynthesis of lysine and meso-diaminopimelic acid, an essential component of bacterial cell walls. This chain is Succinyl-diaminopimelate desuccinylase, found in Xanthomonas oryzae pv. oryzae (strain PXO99A).